Reading from the N-terminus, the 311-residue chain is Transcriptional regulatory protein MoaR1 (311 aa).

The ompR/PhoB-type DNA-binding region spans 15 to 117 (LNATTAGAVQ…SEPPGYRLLI (103 aa)).

Belongs to the AfsR/DnrI/RedD regulatory family.

Its function is as follows. Acts as a positive transcriptional regulator of the molybdopterin biosynthesis moa1 locus, promoting the expression of the moaA1B1C1D1 genes. Binds directly to the moaA1 promoter. The protein is Transcriptional regulatory protein MoaR1 (moaR1) of Mycobacterium tuberculosis (strain ATCC 25618 / H37Rv).